Consider the following 349-residue polypeptide: Farnesyl pyrophosphate synthase (349 aa).

Residues Lys-48, Arg-51, and Gln-90 each contribute to the isopentenyl diphosphate site. Residues Asp-97 and Asp-101 each contribute to the Mg(2+) site. Arg-106 contributes to the dimethylallyl diphosphate binding site. Arg-107 serves as a coordination point for isopentenyl diphosphate. Lys-194, Thr-195, Gln-234, Lys-251, and Lys-260 together coordinate dimethylallyl diphosphate.

Belongs to the FPP/GGPP synthase family. Mg(2+) serves as cofactor.

It localises to the cytoplasm. It carries out the reaction isopentenyl diphosphate + dimethylallyl diphosphate = (2E)-geranyl diphosphate + diphosphate. It catalyses the reaction isopentenyl diphosphate + (2E)-geranyl diphosphate = (2E,6E)-farnesyl diphosphate + diphosphate. It participates in isoprenoid biosynthesis; farnesyl diphosphate biosynthesis; farnesyl diphosphate from geranyl diphosphate and isopentenyl diphosphate: step 1/1. Its pathway is isoprenoid biosynthesis; geranyl diphosphate biosynthesis; geranyl diphosphate from dimethylallyl diphosphate and isopentenyl diphosphate: step 1/1. Catalyzes the sequential condensation of isopentenyl pyrophosphate with the allylic pyrophosphates, dimethylallyl pyrophosphate, and then with the resultant geranylpyrophosphate to the ultimate product farnesyl pyrophosphate. This chain is Farnesyl pyrophosphate synthase (FPS1), found in Kluyveromyces lactis (strain ATCC 8585 / CBS 2359 / DSM 70799 / NBRC 1267 / NRRL Y-1140 / WM37) (Yeast).